The chain runs to 706 residues: Polycomb protein SCMH1 (706 aa).

MBT repeat units lie at residues 28–126 (FTWD…LQPP) and 134–235 (SSWP…LQPP). 2 disordered regions span residues 233-350 (QPPG…TVPS) and 576-595 (GSDRHLESRDPPRLSGRDPS). Basic residues-rich tracts occupy residues 272-283 (RGRKPGKKRGRT) and 304-319 (FPKKRGPKPGSKRKPR). Positions 329–340 (PTTSTPEPDTST) are enriched in low complexity. Residues 576–591 (GSDRHLESRDPPRLSG) are compositionally biased toward basic and acidic residues. In terms of domain architecture, SAM spans 597–662 (WTVEDVMQFV…SFHIDRLKQV (66 aa)).

This sequence belongs to the SCM family. Associates with a PRC1-like complex. Interacts with the SAM domain of PHC1 via its SAM domain in vitro. Most abundant in testis. Moderate levels detected in heart, brain, lung, liver, skeletal muscle and kidney and lower levels in spleen.

It localises to the nucleus. Its function is as follows. Associates with Polycomb group (PcG) multiprotein complexes; the complex class is required to maintain the transcriptionally repressive state of some genes. This is Polycomb protein SCMH1 from Mus musculus (Mouse).